The chain runs to 673 residues: Probable boron transporter 7 (673 aa).

Residues 1-35 (MEGVKFPFGGIINDFNGRRKCYKQDWLAAFNSGVR) are Cytoplasmic-facing. Residues 36-56 (ILAPTLYIFIASALPVIAFGE) form a helical membrane-spanning segment. The Extracellular portion of the chain corresponds to 57–75 (QLSRETDRSLGIAESLAST). A helical membrane pass occupies residues 76 to 96 (ALCGIIHSVFGGQPLLIVGVA). The Cytoplasmic portion of the chain corresponds to 97–121 (EPTIIMYTYLHSFSKSRPELGQKLY). A helical transmembrane segment spans residues 122–142 (LAWAGWVCVWTAVLLMLLAML). Residues 143 to 160 (NACNIISRFTRIAGELFG) are Extracellular-facing. Residues 161 to 181 (MLITVLFIQEAVKGLIGEFLV) form a helical membrane-spanning segment. Over 182–197 (PKSDDPSLEVYQFQWR) the chain is Cytoplasmic. Residues 198-218 (YTNGLLAVIFSFGLLYTALKS) traverse the membrane as a helical segment. Residues 219–233 (RRARSWKYGFRWMRG) lie on the Extracellular side of the membrane. The helical transmembrane segment at 234-254 (FIGDYGTLLMLVLWSAFSYTV) threads the bilayer. Topologically, residues 255 to 289 (PRNLPEGVPRRLELPLPWASESLYHWTVVKDMAKV) are cytoplasmic. Residues 290-310 (PPLYILAAFIPAIMIAGLYFF) form a helical membrane-spanning segment. At 311 to 330 (DHCVSAQMAQQKEFNLKNPT) the chain is on the extracellular side. A helical membrane pass occupies residues 331-351 (AYHYDIFILGIMTLICGLLGL). At 352–468 (PPSNGVIPQS…EQRVSNLLQS (117 aa)) the chain is on the cytoplasmic side. Residues 469 to 489 (VLVGLLILAVPVLRMIPTSVL) traverse the membrane as a helical segment. The Extracellular segment spans residues 490 to 556 (WGYFTYMAVD…QLLYFLICYG (67 aa)). A helical membrane pass occupies residues 557 to 577 (VTWIPVGGILFPLPFFILIAL). The Cytoplasmic segment spans residues 578 to 673 (RQYILQRLFD…SQMVKIYNHS (96 aa)).

This sequence belongs to the anion exchanger (TC 2.A.31.3) family.

The protein localises to the membrane. In terms of biological role, putative boron transporter. Boron is essential for maintaining the integrity of plants cell walls. The chain is Probable boron transporter 7 (BOR7) from Arabidopsis thaliana (Mouse-ear cress).